The chain runs to 182 residues: NADH-quinone oxidoreductase subunit I (182 aa).

2 consecutive 4Fe-4S ferredoxin-type domains span residues 52–82 (LTRD…LQKA) and 92–121 (DFFR…LTPD). The [4Fe-4S] cluster site is built by Cys-62, Cys-65, Cys-68, Cys-72, Cys-101, Cys-104, Cys-107, and Cys-111.

Belongs to the complex I 23 kDa subunit family. As to quaternary structure, NDH-1 is composed of 13 different subunits. Subunits NuoA, H, J, K, L, M, N constitute the membrane sector of the complex. Requires [4Fe-4S] cluster as cofactor.

Its subcellular location is the cell inner membrane. It carries out the reaction a quinone + NADH + 5 H(+)(in) = a quinol + NAD(+) + 4 H(+)(out). Functionally, NDH-1 shuttles electrons from NADH, via FMN and iron-sulfur (Fe-S) centers, to quinones in the respiratory chain. The immediate electron acceptor for the enzyme in this species is believed to be ubiquinone. Couples the redox reaction to proton translocation (for every two electrons transferred, four hydrogen ions are translocated across the cytoplasmic membrane), and thus conserves the redox energy in a proton gradient. This Pseudomonas syringae pv. syringae (strain B728a) protein is NADH-quinone oxidoreductase subunit I.